An 82-amino-acid polypeptide reads, in one-letter code: ATP synthase subunit c, chloroplastic (82 aa).

2 helical membrane-spanning segments follow: residues 7–27 and 57–77; these read AASVIAAGLAVGLAAIGPGIG and LAFMESLTIYGLVVALSLLFA.

This sequence belongs to the ATPase C chain family. F-type ATPases have 2 components, F(1) - the catalytic core - and F(0) - the membrane proton channel. F(1) has five subunits: alpha(3), beta(3), gamma(1), delta(1), epsilon(1). F(0) has four main subunits: a(1), b(1), b'(1) and c(10-14). The alpha and beta chains form an alternating ring which encloses part of the gamma chain. F(1) is attached to F(0) by a central stalk formed by the gamma and epsilon chains, while a peripheral stalk is formed by the delta, b and b' chains.

The protein resides in the plastid. The protein localises to the chloroplast thylakoid membrane. F(1)F(0) ATP synthase produces ATP from ADP in the presence of a proton or sodium gradient. F-type ATPases consist of two structural domains, F(1) containing the extramembraneous catalytic core and F(0) containing the membrane proton channel, linked together by a central stalk and a peripheral stalk. During catalysis, ATP synthesis in the catalytic domain of F(1) is coupled via a rotary mechanism of the central stalk subunits to proton translocation. In terms of biological role, key component of the F(0) channel; it plays a direct role in translocation across the membrane. A homomeric c-ring of between 10-14 subunits forms the central stalk rotor element with the F(1) delta and epsilon subunits. In Porphyra purpurea (Red seaweed), this protein is ATP synthase subunit c, chloroplastic.